We begin with the raw amino-acid sequence, 296 residues long: Prostate androgen-regulated mucin-like protein 1 homolog (296 aa).

An N-terminal signal peptide occupies residues 1–20 (MVCKVLIALCIFTAGLRVQG). At 21–244 (SPTVPLPVSL…EVENALSSGS (224 aa)) the chain is on the extracellular side. N61 and N95 each carry an N-linked (GlcNAc...) asparagine glycan. Positions 72-220 (LTSQLPTDHR…SPQDTEPGKV (149 aa)) are disordered. The span at 78–95 (TDHREEAVTSPPLKRDVN) shows a compositional bias: basic and acidic residues. The span at 96–110 (STDSSPAGFPSTSSD) shows a compositional bias: polar residues. A compositionally biased stretch (low complexity) spans 139–167 (LLSSQAPTSATTSPATSLSESLSASVTSS). Residues 168-177 (HNSTVANIQP) are compositionally biased toward polar residues. An N-linked (GlcNAc...) asparagine glycan is attached at N169. Residues 206-217 (VPKEKSPQDTEP) are compositionally biased toward basic and acidic residues. A helical membrane pass occupies residues 245-265 (IAAITVTVIAVVLLVFGGAAY). The Cytoplasmic segment spans residues 266-296 (LKIRHSSYGRLLDDHDYGSWGNYNNPLYDDS). S284 bears the Phosphoserine mark.

Belongs to the PARM family. Post-translationally, highly N-glycosylated and O-glycosylated.

Its subcellular location is the cell membrane. The protein localises to the golgi apparatus membrane. It localises to the endosome membrane. May regulate TLP1 expression and telomerase activity, thus enabling certain prostatic cells to resist apoptosis. The polypeptide is Prostate androgen-regulated mucin-like protein 1 homolog (Parm1) (Mus musculus (Mouse)).